The following is a 203-amino-acid chain: uncharacterized protein (203 aa).

A helical transmembrane segment spans residues 9–29 (LVVLFTIVTFGLVSPPAALMA).

Its subcellular location is the membrane. This is an uncharacterized protein from Bacillus subtilis (strain 168).